The primary structure comprises 363 residues: Cellular tumor antigen p53 (363 aa).

The segment at 1–29 (MEPSSETGMDPPLSQETFEDLWSLLPDPL) is transcription activation (acidic). The DNA-binding element occupies 76–267 (DYAGKYGLQL…RTEEDNYTKK (192 aa)). The Zn(2+) site is built by Cys-150, His-153, Cys-213, and Cys-217. Residues 248-255 (RVCACPGR) are interaction with DNA. Residues 257–290 (RRTEEDNYTKKRGLKPSGKRELAHPPSSEPPLPK) form a disordered region. Positions 275-292 (KRELAHPPSSEPPLPKKR) match the Bipartite nuclear localization signal motif. The segment at 300 to 331 (EEIFTLRIKGRSRYEMIKKLNDALELQESLDQ) is oligomerization. Positions 314-325 (EMIKKLNDALEL) match the Nuclear export signal motif. A basic (repression of DNA-binding) region spans residues 344 to 356 (EIKPKKGKKLLVK).

This sequence belongs to the p53 family. Binds DNA as a homotetramer. Zn(2+) serves as cofactor. As to expression, ubiquitous.

The protein resides in the cytoplasm. It is found in the nucleus. Its function is as follows. Multifunctional transcription factor that induces cell cycle arrest, DNA repair or apoptosis upon binding to its target DNA sequence. Acts as a tumor suppressor in many tumor types; induces growth arrest or apoptosis depending on the physiological circumstances and cell type. Negatively regulates cell division by controlling expression of a set of genes required for this process. One of the activated genes is an inhibitor of cyclin-dependent kinases. Apoptosis induction seems to be mediated either by stimulation of BAX and FAS antigen expression, or by repression of Bcl-2 expression. In Xenopus laevis (African clawed frog), this protein is Cellular tumor antigen p53 (tp53).